We begin with the raw amino-acid sequence, 431 residues long: Nuclear receptor subfamily 1 group I member 2 (431 aa).

Residues 35 to 104 (LQICRVCGDK…RLRKCLESGM (70 aa)) constitute a DNA-binding region (nuclear receptor). 2 consecutive NR C4-type zinc fingers follow at residues 38 to 58 (CRVC…CEGC) and 74 to 99 (CPFR…LRKC). The Bipartite nuclear localization signal signature appears at 63–89 (RRAMKRNVRLRCPFRKGTCEITRKTRR). The hinge stretch occupies residues 105-142 (KKEMIMSDAAVEQRRALIKRKKREKIEAPPPGGQGLTE). An NR LBD domain is found at 143–430 (EQQALIQELM…LMQELFSSTD (288 aa)). Residues serine 244 and 282–285 (ILRF) contribute to the hyperforin site.

It belongs to the nuclear hormone receptor family. NR1 subfamily. In terms of assembly, heterodimer with RXRA. Interacts with NCOA1. Interacts (via domain NR LBD) with CRY1 and CRY2 in a ligand-dependent manner.

It is found in the nucleus. In terms of biological role, nuclear receptor that binds and is activated by a variety of endogenous and xenobiotic compounds. Transcription factor that activates the transcription of multiple genes involved in the metabolism and secretion of potentially harmful xenobiotics, endogenous compounds and drugs. Response to specific ligands is species-specific, due to differences in the ligand-binding domain. Binds to a response element in the promoters of the CYP3A4 and ABCB1/MDR1 genes. Activated by naturally occurring steroids such as pregnenolone and progesterone, the cholesterol metabolite 5-beta-cholestane-3-alpha,7-alpha,12-alpha-triol, synthetic glucocorticoids and antiglucocorticoids and 16-alpha-carbonitrile (PCN). This is Nuclear receptor subfamily 1 group I member 2 (Nr1i2) from Mus musculus (Mouse).